Here is a 163-residue protein sequence, read N- to C-terminus: F-box protein At2g35280 (163 aa).

Residues 8–57 (ISRLEALPQDLLREIVAKIGVKSAEDYHNCILSCKELGASANDERVLKTL) enclose the F-box domain.

The chain is F-box protein At2g35280 from Arabidopsis thaliana (Mouse-ear cress).